We begin with the raw amino-acid sequence, 213 residues long: Probable septum site-determining protein MinC (213 aa).

Belongs to the MinC family. In terms of assembly, interacts with MinD and FtsZ.

Its function is as follows. Cell division inhibitor that blocks the formation of polar Z ring septums. Rapidly oscillates between the poles of the cell to destabilize FtsZ filaments that have formed before they mature into polar Z rings. Prevents FtsZ polymerization. This Pseudothermotoga lettingae (strain ATCC BAA-301 / DSM 14385 / NBRC 107922 / TMO) (Thermotoga lettingae) protein is Probable septum site-determining protein MinC.